We begin with the raw amino-acid sequence, 1090 residues long: Telomerase reverse transcriptase (1090 aa).

The segment at 184–301 is disordered; that stretch reads GFLLRPPSRK…PLEGGPSWRS (118 aa). A compositionally biased stretch (basic residues) spans 190-204; the sequence is PSRKHKSFQVGKKTR. Basic and acidic residues-rich tracts occupy residues 218 to 232 and 252 to 262; these read EESR…EVST and HHEERRQHEAV. Positions 281-294 are enriched in pro residues; sequence KPPPETSAAPPPLE. The short motif at 316 to 321 is the TFLY; involved in RNA binding element; the sequence is TLGFLY. Interaction with RNA template stretches follow at residues 371 to 376 and 477 to 503; these read LPLRYF and WKIK…ELAY. A Reverse transcriptase domain is found at 569–893; the sequence is SPAQVASLPK…CLFPWCGLLL (325 aa). Residues aspartate 666, aspartate 826, and aspartate 827 each contribute to the Mg(2+) site.

The protein belongs to the reverse transcriptase family. Telomerase subfamily. In terms of assembly, catalytic subunit of the telomerase holoenzyme complex composed minimally of TERT and the telomerase RNA template component (TERC). Expressed at highest levels in gonads and brain, and at lower levels in heart, spleen, kidney, gill, muscle and skin. Detected in embryonic stem cell lines before and after differentiation. Isoform F is expressed in gonads, with higher levels in testis relative to ovary, but is not detected in other tissues. Isoform B is expressed predominantly in testis. Isoform C is up-regulated in embryonic stem cell lines after differentiation.

The protein resides in the nucleus. It localises to the chromosome. The protein localises to the telomere. It carries out the reaction DNA(n) + a 2'-deoxyribonucleoside 5'-triphosphate = DNA(n+1) + diphosphate. Telomerase is a ribonucleoprotein enzyme essential for the replication of chromosome termini in most eukaryotes. It elongates telomeres. It is a reverse transcriptase that adds simple sequence repeats to chromosome ends by copying a template sequence within the RNA component of the enzyme. The sequence is that of Telomerase reverse transcriptase from Oryzias latipes (Japanese rice fish).